The primary structure comprises 498 residues: MAAAKTDMLVSPLQISDPFSSFPHSPTMDNYPKLEEMMLLNPGAPQFLGAAVPEGSGFNSPVEGSEQFDHLAADAFSDMSLSGEKAVIESSYANQSARLPSLTYTGRFSLEPAPNSSNTLWPEPLFSLVSGLVGMANASPSSAPSSSPSSSSSSSQSPPLSCSVQSNDSSPIYSAAPTFPNSSPELFPDQSPQPFQNASTASIPYPPPAYPVSKTTFQVPMIPDYLFPQQQGDVSLVSADQKPFQAMESRTQQPSLTPLSTIKAFATQTSQDLKTINSTYQSQIIKPSRMRKYPNRPSKTPPHERPYACPVESCDRRFSRSDELTRHIRIHTGQKPFQCRICMRNFSRSDHLTTHIRTHTGEKPFACDICGRKFARSDERKRHTKIHLRQKDKKADKATPVSVASPVSSYSPSASTSYPSPVPTSYSSPVSSAYPSPVHSSFPSPTTAVTYPSVTSTFQTHGITSFPSSIVTNSFSSPVSSALSDMSITYSPRTIEIC.

Disordered stretches follow at residues Asn137–Ile203 and Pro287–Ala308. Positions Ser139–Ser163 are enriched in low complexity. Positions Phe179–Ser202 are enriched in polar residues. C2H2-type zinc fingers lie at residues Tyr307–His331, Phe337–His359, and Phe365–His387. The disordered stretch occupies residues Asp378 to Val422. Residues Arg382–Asp392 show a composition bias toward basic residues. Residues Ala398 to Val422 show a composition bias toward low complexity.

This sequence belongs to the EGR C2H2-type zinc-finger protein family.

The protein localises to the nucleus. The protein resides in the cytoplasm. Its function is as follows. Transcriptional regulator. Recognizes and binds to the DNA sequence 5'-GCG(T/G)GGGCG-3'(EGR-site) in the promoter region of target genes. Binds double-stranded target DNA, irrespective of the cytosine methylation status. Regulates the transcription of numerous target genes, and thereby plays an important role in regulating the response to growth factors, DNA damage, and ischemia. Plays a role in the regulation of cell survival, proliferation and cell death. Mediates responses to ischemia and hypoxia; regulates the expression of proteins that are involved in inflammatory processes. Plays a role in regulating the expression of circadian clock genes. The polypeptide is Early growth response protein 1 (Xenopus tropicalis (Western clawed frog)).